The primary structure comprises 65 residues: Conotoxin Lt5.1 (65 aa).

A signal peptide spans 1–19 (MRCLPVFIILLLLIPSAPS). Residues 20–48 (VDAQRKTKDDVPLASFHDNAKRTLKRLWN) constitute a propeptide that is removed on maturation.

This sequence belongs to the conotoxin T superfamily. Post-translationally, contains 2 disulfide bonds that can be either 'C1-C3, C2-C4' or 'C1-C4, C2-C3', since these disulfide connectivities have been observed for conotoxins with cysteine framework V (for examples, see AC P0DQQ7 and AC P81755). In terms of tissue distribution, expressed by the venom duct.

The protein localises to the secreted. This chain is Conotoxin Lt5.1, found in Conus litteratus (Lettered cone).